Consider the following 310-residue polypeptide: AT-hook motif nuclear-localized protein 15 (310 aa).

2 disordered regions span residues 15-112 (VESP…KESP) and 239-310 (EEEQ…PPSY). 2 stretches are compositionally biased toward polar residues: residues 31–41 (SNNNNPPTMTR) and 51–67 (TTNN…SQEE). Residues 88-100 (RRPRGRPPGSKNK) constitute a DNA-binding region (a.T hook). Residues 94 to 104 (PPGSKNKPKSP) show a composition bias toward low complexity. Residues 112-251 (PNSLQSHVLE…QQQEQPLQLE (140 aa)) enclose the PPC domain. Residues 301-310 (GPPPRAPPSY) show a composition bias toward pro residues.

The protein localises to the nucleus. Transcription factor that specifically binds AT-rich DNA sequences related to the nuclear matrix attachment regions (MARs). Binds the DNA sequence GNFEI (GA-negative feedback element I) in the GA3OX1 promoter. Negatively regulates plant innate immunity (PTI) to pathogens through the down-regulation of the PAMP-triggered FRK1 expression. The polypeptide is AT-hook motif nuclear-localized protein 15 (Arabidopsis thaliana (Mouse-ear cress)).